Reading from the N-terminus, the 556-residue chain is Bifunctional methyltransferase (556 aa).

The RF MTase stretch occupies residues Met1 to Gln310. S-adenosyl-L-methionine is bound by residues Gly148–Gly152, Asp171, Trp200, and Asn215. Position 215-218 (Asn215–Tyr218) interacts with substrate. Residues Arg313 to Tyr556 are tRNA MTase. An insert region spans residues Lys348–Ser399. S-adenosyl-L-methionine contacts are provided by Glu403, Glu428, Asn455, and Asp477. Residue Asp477 is part of the active site. Positions 481 and 513 each coordinate substrate.

This sequence in the C-terminal section; belongs to the class I-like SAM-binding methyltransferase superfamily. TrmB family. It in the N-terminal section; belongs to the protein N5-glutamine methyltransferase family. PrmC subfamily.

It carries out the reaction L-glutaminyl-[peptide chain release factor] + S-adenosyl-L-methionine = N(5)-methyl-L-glutaminyl-[peptide chain release factor] + S-adenosyl-L-homocysteine + H(+). The catalysed reaction is guanosine(46) in tRNA + S-adenosyl-L-methionine = N(7)-methylguanosine(46) in tRNA + S-adenosyl-L-homocysteine. In terms of biological role, methylates the class 1 translation termination release factors RF1/PrfA and RF2/PrfB on the glutamine residue of the universally conserved GGQ motif. Catalyzes the formation of N(7)-methylguanine at position 46 (m7G46) in tRNA. The protein is Bifunctional methyltransferase (prmC/trmB) of Rickettsia bellii (strain RML369-C).